The following is a 727-amino-acid chain: Glucans biosynthesis glucosyltransferase H (727 aa).

The tract at residues 18-45 is disordered; the sequence is SAMPNERPGAMEPQSLTEMPEGFPRRST. Transmembrane regions (helical) follow at residues 58–78, 90–110, 278–298, 408–428, 460–480, 496–516, and 572–592; these read FFVV…MGAV, LVLL…CSGI, LQQF…GWWV, IMAY…LMLA, LFYI…LLLL, IFSV…MMFI, and LLAW…ISAW.

Belongs to the glycosyltransferase 2 family. OpgH subfamily.

The protein localises to the cell inner membrane. The protein operates within glycan metabolism; osmoregulated periplasmic glucan (OPG) biosynthesis. Its function is as follows. Involved in the biosynthesis of osmoregulated periplasmic glucans (OPGs). The sequence is that of Glucans biosynthesis glucosyltransferase H from Shewanella putrefaciens (strain CN-32 / ATCC BAA-453).